A 110-amino-acid chain; its full sequence is Large ribosomal subunit protein uL22 (110 aa).

Belongs to the universal ribosomal protein uL22 family. Part of the 50S ribosomal subunit.

In terms of biological role, this protein binds specifically to 23S rRNA; its binding is stimulated by other ribosomal proteins, e.g. L4, L17, and L20. It is important during the early stages of 50S assembly. It makes multiple contacts with different domains of the 23S rRNA in the assembled 50S subunit and ribosome. Its function is as follows. The globular domain of the protein is located near the polypeptide exit tunnel on the outside of the subunit, while an extended beta-hairpin is found that lines the wall of the exit tunnel in the center of the 70S ribosome. In Exiguobacterium sibiricum (strain DSM 17290 / CCUG 55495 / CIP 109462 / JCM 13490 / 255-15), this protein is Large ribosomal subunit protein uL22.